We begin with the raw amino-acid sequence, 228 residues long: MGCKVLVVDLDGTLTLSRNTYELSVEALLALRRARDAGIRVVLATANGLDFALTVARYLGVRDVIAENGCLVHIDGETHELCSGDMSEVDRAVLATGAVAPSHQNKCRRFDLAYVPLVENAVERVKAAVRPGYVVDSSGYAIHVRPAGADKGAAVRWLCERLGVSCGWVAAVGDSDVDAGMLATAWGIAVGNATEAAKRAARAVVRGPSGLGFKEAVDLILSGGACAP.

Aspartate 9 (nucleophile) is an active-site residue. Mg(2+) is bound by residues aspartate 9 and aspartate 11. Lysine 151 is a binding site for substrate. 2 residues coordinate Mg(2+): aspartate 174 and aspartate 178.

Belongs to the archaeal SPP-like hydrolase family. Mg(2+) serves as cofactor.

The catalysed reaction is 2-phosphoglycolate + H2O = glycolate + phosphate. In terms of biological role, catalyzes the dephosphorylation of 2-phosphoglycolate. The polypeptide is Phosphoglycolate phosphatase (Pyrobaculum neutrophilum (strain DSM 2338 / JCM 9278 / NBRC 100436 / V24Sta) (Thermoproteus neutrophilus)).